Reading from the N-terminus, the 508-residue chain is Histidine ammonia-lyase (508 aa).

The segment at residues 141 to 143 (ASG) is a cross-link (5-imidazolinone (Ala-Gly)). Ser142 carries the post-translational modification 2,3-didehydroalanine (Ser).

The protein belongs to the PAL/histidase family. Contains an active site 4-methylidene-imidazol-5-one (MIO), which is formed autocatalytically by cyclization and dehydration of residues Ala-Ser-Gly.

Its subcellular location is the cytoplasm. The catalysed reaction is L-histidine = trans-urocanate + NH4(+). It participates in amino-acid degradation; L-histidine degradation into L-glutamate; N-formimidoyl-L-glutamate from L-histidine: step 1/3. This is Histidine ammonia-lyase (hutH) from Bacillus subtilis (strain 168).